Consider the following 353-residue polypeptide: F-box protein At2g14290 (353 aa).

The region spanning 6 to 58 (PRTWSELPPDLLGSIFHRLSFTDFHRAKIVCWNWNLSSKLTVPKKIRSPWLML) is the F-box domain.

The chain is F-box protein At2g14290 from Arabidopsis thaliana (Mouse-ear cress).